Reading from the N-terminus, the 378-residue chain is 4-hydroxy-3-methylbut-2-en-1-yl diphosphate synthase (flavodoxin) (378 aa).

[4Fe-4S] cluster is bound by residues Cys-268, Cys-271, Cys-303, and Glu-310.

This sequence belongs to the IspG family. [4Fe-4S] cluster is required as a cofactor.

It catalyses the reaction (2E)-4-hydroxy-3-methylbut-2-enyl diphosphate + oxidized [flavodoxin] + H2O + 2 H(+) = 2-C-methyl-D-erythritol 2,4-cyclic diphosphate + reduced [flavodoxin]. Its pathway is isoprenoid biosynthesis; isopentenyl diphosphate biosynthesis via DXP pathway; isopentenyl diphosphate from 1-deoxy-D-xylulose 5-phosphate: step 5/6. Its function is as follows. Converts 2C-methyl-D-erythritol 2,4-cyclodiphosphate (ME-2,4cPP) into 1-hydroxy-2-methyl-2-(E)-butenyl 4-diphosphate. The protein is 4-hydroxy-3-methylbut-2-en-1-yl diphosphate synthase (flavodoxin) of Corynebacterium efficiens (strain DSM 44549 / YS-314 / AJ 12310 / JCM 11189 / NBRC 100395).